The sequence spans 1336 residues: Putative botulinum-like toxin Wo (1336 aa).

The segment at 1-476 is has protease activity; the sequence is MDVLEMFDVN…VAGMQRMVSL (476 aa). Position 250 (His250) interacts with Zn(2+). Glu251 is a catalytic residue. Zn(2+)-binding residues include His254 and Glu296.

This sequence belongs to the peptidase M27 family. The cofactor is Zn(2+).

The catalysed reaction is Limited hydrolysis of proteins of the neuroexocytosis apparatus, synaptobrevins, SNAP25 or syntaxin. No detected action on small molecule substrates.. With respect to regulation, inhibited by EDTA and 1,10-phenanthroline. When overexpressed the N-terminus (residues 1-476) cleaves rat synaptobrevin-2/VAMP2 between '89-Trp-|-Trp-90' in vitro. This releases the cytoplasmic domain of VAMP2 from the synaptic vesicle membrane, which would prevent the assembly of the trans-SNARE complex on the membrane and thus prevent vesicle-target membrane fusion and neurotransmitter release. This chain is Putative botulinum-like toxin Wo, found in Weissella oryzae (strain DSM 25784 / JCM 18191 / LMG 30913 / SG25).